We begin with the raw amino-acid sequence, 160 residues long: Putative UPF0479 protein YBL113W-A (160 aa).

The next 2 helical transmembrane spans lie at 39–59 (IVFC…KVLQ) and 136–156 (VPMI…ISQH).

The protein belongs to the UPF0479 family.

Its subcellular location is the membrane. In Saccharomyces cerevisiae (strain ATCC 204508 / S288c) (Baker's yeast), this protein is Putative UPF0479 protein YBL113W-A.